A 473-amino-acid polypeptide reads, in one-letter code: Presenilin-B (473 aa).

Residues 1–141 form a disordered region; the sequence is MSSDNNNDPF…PLLNKKEKDD (141 aa). At 1–164 the chain is on the cytoplasmic side; that stretch reads MSSDNNNDPF…DDEVSLQDFS (164 aa). Residues 22-46 are compositionally biased toward polar residues; sequence RVSTTTSPNRQSINSSPKQSSPKST. Positions 54–72 are enriched in low complexity; sequence NIILDLNDNNNDNNNTNNY. Residues 79–89 show a composition bias toward basic and acidic residues; the sequence is VDNKNKFENKD. A helical transmembrane segment spans residues 165-185; that stretch reads SMIVSIIIPVSITMMAVVFFV. Residues 186–224 lie on the Lumenal side of the membrane; sequence KYLNNQTLYASTLSYTIAGGSSGGGSGADSITGNSFVDS. N190 carries N-linked (GlcNAc...) asparagine glycosylation. A helical membrane pass occupies residues 225-245; sequence LIVAGIVLGMIIVTTVAFVLL. The Cytoplasmic portion of the chain corresponds to 246–252; sequence YKYRCLK. Residues 253 to 273 traverse the membrane as a helical segment; sequence ILYGWLFLSVGMMLGSFGTTF. Residues 274–286 lie on the Lumenal side of the membrane; that stretch reads FQAMLSAANLPLD. Residues 287–307 form a helical membrane-spanning segment; that stretch reads YITFAFLIFNFTVCGIIGVFW. A topological domain (cytoplasmic) is located at residue Y308. Residues 309-329 form a helical membrane-spanning segment; it reads AHQYVNQLYLVIISVLMAISL. Residues 330-334 are Lumenal-facing; the sequence is TRLPQ. Residues 335–355 traverse the membrane as a helical segment; that stretch reads WTIFTLLVIVAIYDLFAVLCP. D348 is an active-site residue. Residues 356–389 lie on the Cytoplasmic side of the membrane; the sequence is RGPLKVLVELSQERNENIPALVYETGKGSDSNLK. Residues 390 to 410 form a helical membrane-spanning segment; that stretch reads LGLGDFIFYSLLISRAALVHM. D394 is a catalytic residue. At 411-413 the chain is on the lumenal side; that stretch reads SCV. A helical transmembrane segment spans residues 414 to 434; it reads FSTFIAILTGLFLTLLCLAIF. The Cytoplasmic portion of the chain corresponds to 435–442; that stretch reads KKALPALP. Positions 439–441 match the PAL motif; the sequence is PAL. The helical intramembrane region spans 443–463; the sequence is ISIFLGILFYYLSNNFLTPFI. Over 464 to 473 the chain is Cytoplasmic; the sequence is EALTLSQIFV.

It belongs to the peptidase A22A family. Homodimer. Component of the gamma-secretase complex, a complex composed of a presenilin homodimer, nicastrin, aph1 and pen2.

The protein resides in the endoplasmic reticulum membrane. It is found in the golgi apparatus membrane. Functionally, probable catalytic subunit of the gamma-secretase complex, an endoprotease complex that catalyzes the intramembrane cleavage of integral membrane proteins such as Notch receptors. Requires the other members of the gamma-secretase complex to have a protease activity. In Dictyostelium discoideum (Social amoeba), this protein is Presenilin-B (psenB).